The primary structure comprises 602 residues: UvrABC system protein C (602 aa).

A GIY-YIG domain is found at 17–94 (KTSGCYKMYS…IKKYKPTYNI (78 aa)). The UVR domain maps to 199–234 (SKLLNDIEIKMKEVIMKENFEAAIKLKETKKSLIEI).

It belongs to the UvrC family. In terms of assembly, interacts with UvrB in an incision complex.

It localises to the cytoplasm. Its function is as follows. The UvrABC repair system catalyzes the recognition and processing of DNA lesions. UvrC both incises the 5' and 3' sides of the lesion. The N-terminal half is responsible for the 3' incision and the C-terminal half is responsible for the 5' incision. The polypeptide is UvrABC system protein C (Borrelia recurrentis (strain A1)).